A 34-amino-acid polypeptide reads, in one-letter code: Beta/mu-theraphotoxin-Pe1b (34 aa).

Cystine bridges form between Cys-2–Cys-16, Cys-9–Cys-21, and Cys-15–Cys-28.

Belongs to the neurotoxin 10 (Hwtx-1) family. 54 (ProTx-1) subfamily. Expressed by the venom gland.

The protein localises to the secreted. Its function is as follows. Ion channel impairing toxin that inhibits several voltage-gated sodium channels. It acts by inhibiting the inward component of the sodium current and by shifting the voltage dependence of channel activation to more depolarized potentials. Its most potent activity is on Nav1.7/SCN9A (IC(50)=167 nM), followed by Nav1.6/SCN8A (IC(50)=696 nM), and Nav1.2/SCN2A (IC(50)=3.54 uM). The sequence is that of Beta/mu-theraphotoxin-Pe1b from Phormingochilus everetti (Malaysian purple earth tiger tarantula).